The sequence spans 218 residues: Riboflavin synthase (218 aa).

2 Lumazine-binding repeats span residues 1 to 97 (MFTG…FGGH) and 98 to 194 (IVSG…ERLL). Residues 4-6 (GII), 48-50 (CLT), 62-67 (DLSIET), 101-103 (GHV), Lys-136, 145-147 (SLT), and 159-164 (TIVPHT) each bind 2,4-dihydroxypteridine.

As to quaternary structure, homotrimer.

The catalysed reaction is 2 6,7-dimethyl-8-(1-D-ribityl)lumazine + H(+) = 5-amino-6-(D-ribitylamino)uracil + riboflavin. It participates in cofactor biosynthesis; riboflavin biosynthesis; riboflavin from 2-hydroxy-3-oxobutyl phosphate and 5-amino-6-(D-ribitylamino)uracil: step 2/2. Functionally, catalyzes the dismutation of two molecules of 6,7-dimethyl-8-ribityllumazine, resulting in the formation of riboflavin and 5-amino-6-(D-ribitylamino)uracil. The sequence is that of Riboflavin synthase from Photobacterium phosphoreum.